Consider the following 109-residue polypeptide: Thiosulfate sulfurtransferase GlpE (109 aa).

One can recognise a Rhodanese domain in the interval 17–105 (AQGQALLLDI…WQRAYPEEVA (89 aa)). The active-site Cysteine persulfide intermediate is the Cys65.

This sequence belongs to the GlpE family.

It is found in the cytoplasm. The catalysed reaction is thiosulfate + hydrogen cyanide = thiocyanate + sulfite + 2 H(+). It carries out the reaction thiosulfate + [thioredoxin]-dithiol = [thioredoxin]-disulfide + hydrogen sulfide + sulfite + 2 H(+). Functionally, transferase that catalyzes the transfer of sulfur from thiosulfate to thiophilic acceptors such as cyanide or dithiols. May function in a CysM-independent thiosulfate assimilation pathway by catalyzing the conversion of thiosulfate to sulfite, which can then be used for L-cysteine biosynthesis. This chain is Thiosulfate sulfurtransferase GlpE, found in Edwardsiella ictaluri (strain 93-146).